A 1096-amino-acid polypeptide reads, in one-letter code: Constitutive coactivator of PPAR-gamma-like protein 2 (1096 aa).

Low complexity predominate over residues 35-59 (QQQHLHRQLPPTAALAPGAPRAARG). Disordered regions lie at residues 35 to 113 (QQQH…PPQL), 508 to 579 (NYLP…DGEP), and 971 to 1096 (SRSS…RKED). Arg58 bears the Omega-N-methylarginine mark. Positions 82 to 95 (TRHHHPAHHFHHHG) are enriched in basic residues. The segment covering 101 to 113 (LHPPLPPPPPPQL) has biased composition (pro residues). Residues 540 to 559 (HITEAFHHQPEWGNPNRDRG) are compositionally biased toward basic and acidic residues. Arg977 carries the omega-N-methylarginine modification. Basic and acidic residues-rich tracts occupy residues 1041 to 1050 (IKEEKSDHRL) and 1076 to 1096 (NREKNHLQEQKLETVAQRKED). Lys1042 participates in a covalent cross-link: Glycyl lysine isopeptide (Lys-Gly) (interchain with G-Cter in SUMO2).

The protein belongs to the constitutive coactivator of PPAR-gamma family. Expressed at low levels in a number of tissues.

This Homo sapiens (Human) protein is Constitutive coactivator of PPAR-gamma-like protein 2 (FAM120C).